The primary structure comprises 139 residues: uncharacterized protein (139 aa).

The next 2 helical transmembrane spans lie at Leu71–Leu91 and Glu97–Val117.

The protein belongs to the RseC family.

Its subcellular location is the cell inner membrane. This is an uncharacterized protein from Haemophilus influenzae (strain ATCC 51907 / DSM 11121 / KW20 / Rd).